A 64-amino-acid chain; its full sequence is Disintegrin lebein-1-beta (64 aa).

The region spanning 1-64 (NSGNPCCDPV…SDCPRNPYKD (64 aa)) is the Disintegrin domain. Disulfide bonds link cysteine 6/cysteine 29, cysteine 20/cysteine 26, cysteine 25/cysteine 50, and cysteine 38/cysteine 57. The Cell attachment site motif lies at 42–44 (RGD).

This sequence belongs to the disintegrin family. Dimeric disintegrin subfamily. Heterodimer with subunit alpha; disulfide-linked. In terms of tissue distribution, expressed by the venom gland.

It is found in the secreted. Functionally, strongly inhibits ADP-induced platelet aggregation on human platelet-rich plasma. Also avidly binds to the laminin-binding beta-1 integrins (alpha-3/beta-1, alpha-6/beta-1, and alpha-7/beta-1) in an RGD-independent manner. The sequence is that of Disintegrin lebein-1-beta from Macrovipera lebetinus (Levantine viper).